The chain runs to 353 residues: Photosystem II protein D1 (353 aa).

N-acetylthreonine is present on threonine 2. Position 2 is a phosphothreonine (threonine 2). 3 helical membrane passes run tyrosine 29–serine 46, histidine 118–leucine 133, and tryptophan 142–alanine 156. Histidine 118 is a chlorophyll a binding site. Tyrosine 126 contacts pheophytin a. Positions 170 and 189 each coordinate [CaMn4O5] cluster. A helical transmembrane segment spans residues phenylalanine 197 to leucine 218. Histidine 198 is a chlorophyll a binding site. Residues histidine 215 and serine 264–phenylalanine 265 contribute to the a quinone site. Histidine 215 lines the Fe cation pocket. Histidine 272 provides a ligand contact to Fe cation. The chain crosses the membrane as a helical span at residues phenylalanine 274–leucine 288. Residues histidine 332, glutamate 333, aspartate 342, and alanine 344 each coordinate [CaMn4O5] cluster. Residues valine 345–glycine 353 constitute a propeptide that is removed on maturation.

This sequence belongs to the reaction center PufL/M/PsbA/D family. In terms of assembly, PSII is composed of 1 copy each of membrane proteins PsbA, PsbB, PsbC, PsbD, PsbE, PsbF, PsbH, PsbI, PsbJ, PsbK, PsbL, PsbM, PsbT, PsbX, PsbY, PsbZ, Psb30/Ycf12, at least 3 peripheral proteins of the oxygen-evolving complex and a large number of cofactors. It forms dimeric complexes. The D1/D2 heterodimer binds P680, chlorophylls that are the primary electron donor of PSII, and subsequent electron acceptors. It shares a non-heme iron and each subunit binds pheophytin, quinone, additional chlorophylls, carotenoids and lipids. D1 provides most of the ligands for the Mn4-Ca-O5 cluster of the oxygen-evolving complex (OEC). There is also a Cl(-1) ion associated with D1 and D2, which is required for oxygen evolution. The PSII complex binds additional chlorophylls, carotenoids and specific lipids. is required as a cofactor. Tyr-161 forms a radical intermediate that is referred to as redox-active TyrZ, YZ or Y-Z. Post-translationally, C-terminally processed by CTPA; processing is essential to allow assembly of the oxygen-evolving complex and thus photosynthetic growth.

The protein localises to the plastid. Its subcellular location is the chloroplast thylakoid membrane. It carries out the reaction 2 a plastoquinone + 4 hnu + 2 H2O = 2 a plastoquinol + O2. Photosystem II (PSII) is a light-driven water:plastoquinone oxidoreductase that uses light energy to abstract electrons from H(2)O, generating O(2) and a proton gradient subsequently used for ATP formation. It consists of a core antenna complex that captures photons, and an electron transfer chain that converts photonic excitation into a charge separation. The D1/D2 (PsbA/PsbD) reaction center heterodimer binds P680, the primary electron donor of PSII as well as several subsequent electron acceptors. The chain is Photosystem II protein D1 from Aethionema cordifolium (Lebanon stonecress).